Reading from the N-terminus, the 153-residue chain is ATP synthase subunit b' (153 aa).

Residues 23-40 (LMAIQVVALTYILNSLFF) form a helical membrane-spanning segment.

The protein belongs to the ATPase B chain family. In terms of assembly, F-type ATPases have 2 components, F(1) - the catalytic core - and F(0) - the membrane proton channel. F(1) has five subunits: alpha(3), beta(3), gamma(1), delta(1), epsilon(1). F(0) has four main subunits: a(1), b(1), b'(1) and c(10-14). The alpha and beta chains form an alternating ring which encloses part of the gamma chain. F(1) is attached to F(0) by a central stalk formed by the gamma and epsilon chains, while a peripheral stalk is formed by the delta, b and b' chains.

Its subcellular location is the cellular thylakoid membrane. In terms of biological role, f(1)F(0) ATP synthase produces ATP from ADP in the presence of a proton or sodium gradient. F-type ATPases consist of two structural domains, F(1) containing the extramembraneous catalytic core and F(0) containing the membrane proton channel, linked together by a central stalk and a peripheral stalk. During catalysis, ATP synthesis in the catalytic domain of F(1) is coupled via a rotary mechanism of the central stalk subunits to proton translocation. Its function is as follows. Component of the F(0) channel, it forms part of the peripheral stalk, linking F(1) to F(0). The b'-subunit is a diverged and duplicated form of b found in plants and photosynthetic bacteria. The sequence is that of ATP synthase subunit b' from Prochlorococcus marinus (strain MIT 9301).